The chain runs to 531 residues: Protein RPN4 (531 aa).

Residues 338-432 (RFPSPSTSAN…PSAHTSSSDG (95 aa)) are disordered. Residues 341 to 354 (SPSTSANVPSTATT) are compositionally biased toward polar residues. The span at 362 to 375 (SSSNRSCVSNSNEN) shows a compositional bias: low complexity. The short motif at 382–398 (KKPTSAVVSSNASRRKL) is the Nuclear localization signal element. Over residues 394-407 (SRRKLINYTKKHLS) the composition is skewed to basic residues. The span at 408–430 (SHSSTNSNSKPSTASPSAHTSSS) shows a compositional bias: low complexity.

Probably interacts with SEC63. Interacts with MUB1, UBR2 and RPN2. Post-translationally, ubiquitinated by UBR2 in the presence of UBC2; which leads to proteasomal degradation.

The protein resides in the nucleus. Functionally, acts as a transcriptional activator of a number of genes encoding proteasomal subunits. Binds to a PACE (proteasome-associated control element) DNA sequence 5'-GGTGGCAAA-3'. Its expression is in turn regulated by the 26S proteasome, thereby providing a negative feedback control mechanism. Required for normal growth at low temperatures. This Saccharomyces cerevisiae (strain ATCC 204508 / S288c) (Baker's yeast) protein is Protein RPN4 (RPN4).